The primary structure comprises 98 residues: NADH-ubiquinone oxidoreductase chain 4L (98 aa).

The next 3 membrane-spanning stretches (helical) occupy residues 1-21 (MTSI…GVLM), 28-48 (STLL…SLLI), and 59-79 (APLI…ALLV).

Belongs to the complex I subunit 4L family. In terms of assembly, core subunit of respiratory chain NADH dehydrogenase (Complex I) which is composed of 45 different subunits.

Its subcellular location is the mitochondrion inner membrane. The catalysed reaction is a ubiquinone + NADH + 5 H(+)(in) = a ubiquinol + NAD(+) + 4 H(+)(out). In terms of biological role, core subunit of the mitochondrial membrane respiratory chain NADH dehydrogenase (Complex I) which catalyzes electron transfer from NADH through the respiratory chain, using ubiquinone as an electron acceptor. Part of the enzyme membrane arm which is embedded in the lipid bilayer and involved in proton translocation. The protein is NADH-ubiquinone oxidoreductase chain 4L (MT-ND4L) of Phascolarctos cinereus (Koala).